We begin with the raw amino-acid sequence, 381 residues long: Alkanesulfonate monooxygenase (381 aa).

The protein belongs to the SsuD family. In terms of assembly, homotetramer.

It catalyses the reaction an alkanesulfonate + FMNH2 + O2 = an aldehyde + FMN + sulfite + H2O + 2 H(+). Its function is as follows. Catalyzes the desulfonation of aliphatic sulfonates. This chain is Alkanesulfonate monooxygenase, found in Escherichia coli O157:H7.